The primary structure comprises 121 residues: Phosphoribosyl-ATP pyrophosphatase (121 aa).

The protein belongs to the PRA-PH family.

It is found in the cytoplasm. It catalyses the reaction 1-(5-phospho-beta-D-ribosyl)-ATP + H2O = 1-(5-phospho-beta-D-ribosyl)-5'-AMP + diphosphate + H(+). It functions in the pathway amino-acid biosynthesis; L-histidine biosynthesis; L-histidine from 5-phospho-alpha-D-ribose 1-diphosphate: step 2/9. The protein is Phosphoribosyl-ATP pyrophosphatase of Burkholderia cenocepacia (strain HI2424).